A 1182-amino-acid chain; its full sequence is Lysine-specific demethylase hairless (1182 aa).

Disordered regions lie at residues 227–257 (LGLA…GAGR), 302–380 (YQLG…KKTW), 411–443 (AGSP…ARAW), and 507–546 (TGHS…ASLN). The segment covering 307–321 (PATPRCPSPGPPTPP) has biased composition (pro residues). Residues 561-565 (LCRLL) carry the LXXLL motif 1 motif. The segment at 595-620 (CSRCHHGLFNTHWRCSHCSHRLCVAC) adopts a C6-type zinc-finger fold. Residues 697-746 (GDGGQQKEPTEKTPPTPQPSCNGDSNRTKDIKEETPDSTESPAEDGAGRS) form a disordered region. Residues 722–731 (NRTKDIKEET) are compositionally biased toward basic and acidic residues. The LXXLL motif 2 motif lies at 753–757 (LCELL). Residues 939–1150 (DASRVQNLAS…LSAQLYHQGA (212 aa)) form the JmjC domain. Residues Cys-1000, Glu-1002, and His-1118 each contribute to the Fe cation site.

Requires Fe(2+) as cofactor. Expressed predominantly in brain, hair follicles and interfollicular epidermis. No expression in dermis.

It localises to the nucleus. It catalyses the reaction N(6),N(6)-dimethyl-L-lysyl(9)-[histone H3] + 2 2-oxoglutarate + 2 O2 = L-lysyl(9)-[histone H3] + 2 formaldehyde + 2 succinate + 2 CO2. Histone demethylase that specifically demethylates both mono- and dimethylated 'Lys-9' of histone H3. May act as a transcription regulator controlling hair biology (via targeting of collagens), neural activity, and cell cycle. The polypeptide is Lysine-specific demethylase hairless (Hr) (Mus musculus (Mouse)).